A 196-amino-acid polypeptide reads, in one-letter code: Pyridoxine/pyridoxamine 5'-phosphate oxidase (196 aa).

Residues 46–51 (RNVLYK), 61–62 (FT), arginine 67, lysine 68, and glutamine 90 each bind FMN. Position 51 (lysine 51) interacts with substrate. Residues tyrosine 108, arginine 112, and serine 116 each contribute to the substrate site. Residues 125–126 (QS) and tryptophan 169 contribute to the FMN site. 175–177 (RLH) serves as a coordination point for substrate. Position 179 (arginine 179) interacts with FMN.

Belongs to the pyridoxamine 5'-phosphate oxidase family. In terms of assembly, homodimer. The cofactor is FMN.

It carries out the reaction pyridoxamine 5'-phosphate + O2 + H2O = pyridoxal 5'-phosphate + H2O2 + NH4(+). The enzyme catalyses pyridoxine 5'-phosphate + O2 = pyridoxal 5'-phosphate + H2O2. Its pathway is cofactor metabolism; pyridoxal 5'-phosphate salvage; pyridoxal 5'-phosphate from pyridoxamine 5'-phosphate: step 1/1. It functions in the pathway cofactor metabolism; pyridoxal 5'-phosphate salvage; pyridoxal 5'-phosphate from pyridoxine 5'-phosphate: step 1/1. In terms of biological role, catalyzes the oxidation of either pyridoxine 5'-phosphate (PNP) or pyridoxamine 5'-phosphate (PMP) into pyridoxal 5'-phosphate (PLP). The sequence is that of Pyridoxine/pyridoxamine 5'-phosphate oxidase from Coxiella burnetii (strain RSA 493 / Nine Mile phase I).